The primary structure comprises 213 residues: MNKSHHPHRGLLLMVVAPSGVGKTSLTRRLVSDHGDLHLSISATTRDPRPGEHDGRDYHFVSRDKFQGMLAEDAFLEWAEVYGNFYGSPKAPIMDALSRGESVLFDIDFQGAMKVHKQAGADSVLVYILPPSLAEMSRRLHTRSQDSEEVIHRRLSRAKDEVAAWEQFDYVILNDDFDRAYADLAHIYHAERLKRARNPWIGDLVSDLLKEEI.

The region spanning 10 to 189 is the Guanylate kinase-like domain; it reads GLLLMVVAPS…AYADLAHIYH (180 aa). 17–24 lines the ATP pocket; the sequence is APSGVGKT.

Belongs to the guanylate kinase family.

It is found in the cytoplasm. The enzyme catalyses GMP + ATP = GDP + ADP. Essential for recycling GMP and indirectly, cGMP. The protein is Guanylate kinase (gmk) of Caulobacter vibrioides (strain ATCC 19089 / CIP 103742 / CB 15) (Caulobacter crescentus).